Reading from the N-terminus, the 183-residue chain is Disulfide bond formation protein B 2 (183 aa).

The Cytoplasmic portion of the chain corresponds to 1 to 9 (MSLACSRSL). Residues 10–26 (FFMAFTAGILALGASYY) form a helical membrane-spanning segment. At 27 to 44 (LEYAVGLVPCSLCLVQRL) the chain is on the periplasmic side. C36 and C39 form a disulfide bridge. A helical membrane pass occupies residues 45–61 (FMSVLTLCCGLAAVHGP). Residues 62-68 (QRVGLSL) lie on the Cytoplasmic side of the membrane. The helical transmembrane segment at 69-85 (YWMVTLLSSLGGTTAAW) threads the bilayer. The Periplasmic portion of the chain corresponds to 86–142 (RQVLFQSDSLQELAHCAPNPEEMFSSLPWLCALMRMFNDTADCAELSWTLFDLSIPE). A disulfide bridge links C101 with C128. A helical membrane pass occupies residues 143–161 (WSLLFFVGMSILAVYQLLR). Residues 162–183 (QVWMALQRPLSGQPSHPALVRD) are Cytoplasmic-facing.

The protein belongs to the DsbB family.

It is found in the cell inner membrane. Functionally, required for disulfide bond formation in some periplasmic proteins. Acts by oxidizing the DsbA protein. In Pseudomonas fluorescens (strain Pf0-1), this protein is Disulfide bond formation protein B 2.